A 475-amino-acid polypeptide reads, in one-letter code: UDP-N-acetylmuramate--L-alanine ligase (475 aa).

121–127 (GTHGKTT) is a binding site for ATP.

The protein belongs to the MurCDEF family.

The protein localises to the cytoplasm. The catalysed reaction is UDP-N-acetyl-alpha-D-muramate + L-alanine + ATP = UDP-N-acetyl-alpha-D-muramoyl-L-alanine + ADP + phosphate + H(+). Its pathway is cell wall biogenesis; peptidoglycan biosynthesis. Functionally, cell wall formation. The sequence is that of UDP-N-acetylmuramate--L-alanine ligase from Salinibacter ruber (strain DSM 13855 / M31).